The following is a 362-amino-acid chain: Cobalt-precorrin-5B C(1)-methyltransferase (362 aa).

This sequence belongs to the CbiD family.

The catalysed reaction is Co-precorrin-5B + S-adenosyl-L-methionine = Co-precorrin-6A + S-adenosyl-L-homocysteine. The protein operates within cofactor biosynthesis; adenosylcobalamin biosynthesis; cob(II)yrinate a,c-diamide from sirohydrochlorin (anaerobic route): step 6/10. Catalyzes the methylation of C-1 in cobalt-precorrin-5B to form cobalt-precorrin-6A. The protein is Cobalt-precorrin-5B C(1)-methyltransferase of Burkholderia cenocepacia (strain HI2424).